The sequence spans 282 residues: Bifunctional protein FolD (282 aa).

Residues 165 to 167 and serine 190 contribute to the NADP(+) site; that span reads GRS.

Belongs to the tetrahydrofolate dehydrogenase/cyclohydrolase family. As to quaternary structure, homodimer.

It carries out the reaction (6R)-5,10-methylene-5,6,7,8-tetrahydrofolate + NADP(+) = (6R)-5,10-methenyltetrahydrofolate + NADPH. It catalyses the reaction (6R)-5,10-methenyltetrahydrofolate + H2O = (6R)-10-formyltetrahydrofolate + H(+). It participates in one-carbon metabolism; tetrahydrofolate interconversion. Functionally, catalyzes the oxidation of 5,10-methylenetetrahydrofolate to 5,10-methenyltetrahydrofolate and then the hydrolysis of 5,10-methenyltetrahydrofolate to 10-formyltetrahydrofolate. The protein is Bifunctional protein FolD of Macrococcus caseolyticus (strain JCSC5402) (Macrococcoides caseolyticum).